The chain runs to 556 residues: 2-succinyl-5-enolpyruvyl-6-hydroxy-3-cyclohexene-1-carboxylate synthase (556 aa).

Belongs to the TPP enzyme family. MenD subfamily. Homodimer. The cofactor is Mg(2+). Mn(2+) is required as a cofactor. Requires thiamine diphosphate as cofactor.

The enzyme catalyses isochorismate + 2-oxoglutarate + H(+) = 5-enolpyruvoyl-6-hydroxy-2-succinyl-cyclohex-3-ene-1-carboxylate + CO2. It functions in the pathway quinol/quinone metabolism; 1,4-dihydroxy-2-naphthoate biosynthesis; 1,4-dihydroxy-2-naphthoate from chorismate: step 2/7. It participates in quinol/quinone metabolism; menaquinone biosynthesis. Catalyzes the thiamine diphosphate-dependent decarboxylation of 2-oxoglutarate and the subsequent addition of the resulting succinic semialdehyde-thiamine pyrophosphate anion to isochorismate to yield 2-succinyl-5-enolpyruvyl-6-hydroxy-3-cyclohexene-1-carboxylate (SEPHCHC). This Saccharopolyspora erythraea (strain ATCC 11635 / DSM 40517 / JCM 4748 / NBRC 13426 / NCIMB 8594 / NRRL 2338) protein is 2-succinyl-5-enolpyruvyl-6-hydroxy-3-cyclohexene-1-carboxylate synthase.